The primary structure comprises 517 residues: Crotonobetaine/carnitine--CoA ligase (517 aa).

Belongs to the ATP-dependent AMP-binding enzyme family.

It catalyses the reaction 4-(trimethylamino)butanoate + ATP + CoA = 4-(trimethylamino)butanoyl-CoA + AMP + diphosphate. The enzyme catalyses crotonobetaine + ATP + CoA = crotonobetainyl-CoA + AMP + diphosphate. The catalysed reaction is (R)-carnitine + ATP + CoA = (R)-carnitinyl-CoA + AMP + diphosphate. Its pathway is amine and polyamine metabolism; carnitine metabolism. Functionally, catalyzes the transfer of CoA to carnitine, generating the initial carnitinyl-CoA needed for the CaiB reaction cycle. Also has activity toward crotonobetaine and gamma-butyrobetaine. The sequence is that of Crotonobetaine/carnitine--CoA ligase from Escherichia coli O6:K15:H31 (strain 536 / UPEC).